Reading from the N-terminus, the 81-residue chain is Cytotoxin (81 aa).

The first 21 residues, 1-21, serve as a signal peptide directing secretion; sequence MKTLLLTTVVVTIVCLDLEYT. 4 disulfide bridges follow: cysteine 24–cysteine 42, cysteine 35–cysteine 59, cysteine 63–cysteine 74, and cysteine 75–cysteine 80.

Belongs to the three-finger toxin family. Short-chain subfamily. Type IA cytotoxin sub-subfamily. Monomer in solution; Homodimer and oligomer in the presence of negatively charged lipids forming a pore with a size ranging between 20 and 30 Angstroms. As to expression, expressed by the venom gland.

It is found in the secreted. The protein localises to the target cell membrane. Functionally, shows cytolytic activity on many different cells by forming pore in lipid membranes. In vivo, increases heart rate or kills the animal by cardiac arrest. In addition, it binds to heparin with high affinity, interacts with Kv channel-interacting protein 1 (KCNIP1) in a calcium-independent manner, and binds to integrin alpha-V/beta-3 (ITGAV/ITGB3) with moderate affinity. The sequence is that of Cytotoxin from Naja sputatrix (Malayan spitting cobra).